The sequence spans 250 residues: Triosephosphate isomerase (250 aa).

Substrate is bound at residue 9–11; the sequence is NWK. Catalysis depends on histidine 94, which acts as the Electrophile. The active-site Proton acceptor is glutamate 166. Substrate-binding positions include glycine 172, serine 211, and 232-233; that span reads GG.

Belongs to the triosephosphate isomerase family. As to quaternary structure, homodimer.

The protein resides in the cytoplasm. It catalyses the reaction D-glyceraldehyde 3-phosphate = dihydroxyacetone phosphate. The protein operates within carbohydrate biosynthesis; gluconeogenesis. Its pathway is carbohydrate degradation; glycolysis; D-glyceraldehyde 3-phosphate from glycerone phosphate: step 1/1. Its function is as follows. Involved in the gluconeogenesis. Catalyzes stereospecifically the conversion of dihydroxyacetone phosphate (DHAP) to D-glyceraldehyde-3-phosphate (G3P). The chain is Triosephosphate isomerase from Methylococcus capsulatus (strain ATCC 33009 / NCIMB 11132 / Bath).